The chain runs to 312 residues: Small kinetochore-associated protein (312 aa).

The tract at residues 1–171 (MAAPEAEAQE…PFNKQKPEEE (171 aa)) is disordered. Basic and acidic residues predominate over residues 131–143 (DVTKVTKSRRENG). The segment at 156-312 (LRNSYKPFNK…LEEMEQLLEM (157 aa)) is interaction with SPAG5. Coiled coils occupy residues 166–210 (QKPE…LEKF) and 246–287 (LLET…QFLE).

Part of an astrin (SPAG5)-kinastrin (SKAP) complex containing KNSTRN, SPAG5, PLK1, DYNLL1 and SGO2A. Interacts with SPAG5. Directly binds to microtubules, although at relatively low affinity. Interacts with CENPE; this interaction greatly favors microtubule-binding. Interacts with DSN1/MIS13; leading to localization to kinetochores. Interacts with MAPRE1/EB1; leading to localization to the microtubule plus ends. Interacts with PRPF19. Interacts with DYNLL1. Interacts with MAP4.

Its subcellular location is the nucleus. The protein localises to the chromosome. The protein resides in the centromere. It localises to the kinetochore. It is found in the cytoplasm. Its subcellular location is the cytoskeleton. The protein localises to the spindle pole. The protein resides in the microtubule organizing center. Its function is as follows. Essential component of the mitotic spindle required for faithful chromosome segregation and progression into anaphase. Promotes the metaphase-to-anaphase transition and is required for chromosome alignment, normal timing of sister chromatid segregation, and maintenance of spindle pole architecture. The astrin (SPAG5)-kinastrin (SKAP) complex promotes stable microtubule-kinetochore attachments. Required for kinetochore oscillations and dynamics of microtubule plus-ends during live cell mitosis, possibly by forming a link between spindle microtubule plus-ends and mitotic chromosomes to achieve faithful cell division. This is Small kinetochore-associated protein (Knstrn) from Mus musculus (Mouse).